The primary structure comprises 120 residues: UPF0231 protein YacL (120 aa).

Belongs to the UPF0231 family.

The polypeptide is UPF0231 protein YacL (Salmonella heidelberg (strain SL476)).